Reading from the N-terminus, the 472-residue chain is Argininosuccinate lyase (472 aa).

The protein belongs to the lyase 1 family. Argininosuccinate lyase subfamily.

It localises to the cytoplasm. The catalysed reaction is 2-(N(omega)-L-arginino)succinate = fumarate + L-arginine. It participates in amino-acid biosynthesis; L-arginine biosynthesis; L-arginine from L-ornithine and carbamoyl phosphate: step 3/3. The chain is Argininosuccinate lyase from Rhodococcus jostii (strain RHA1).